The sequence spans 98 residues: NADH-ubiquinone oxidoreductase chain 4L (98 aa).

The next 3 membrane-spanning stretches (helical) occupy residues 1-21 (MSLT…GLLM), 29-49 (SLLC…ITIL), and 61-81 (IILL…LVMV).

The protein belongs to the complex I subunit 4L family. As to quaternary structure, core subunit of respiratory chain NADH dehydrogenase (Complex I) which is composed of 45 different subunits.

The protein resides in the mitochondrion inner membrane. The catalysed reaction is a ubiquinone + NADH + 5 H(+)(in) = a ubiquinol + NAD(+) + 4 H(+)(out). Functionally, core subunit of the mitochondrial membrane respiratory chain NADH dehydrogenase (Complex I) which catalyzes electron transfer from NADH through the respiratory chain, using ubiquinone as an electron acceptor. Part of the enzyme membrane arm which is embedded in the lipid bilayer and involved in proton translocation. This chain is NADH-ubiquinone oxidoreductase chain 4L (MT-ND4L), found in Mystacina tuberculata (New Zealand lesser short-tailed bat).